The sequence spans 665 residues: GRB2-associated-binding protein 2 (665 aa).

Ser-2 is modified (phosphoserine). The PH domain occupies 8–119; sequence DVVCTGWLRK…WVQSICQICG (112 aa). The interval 131–184 is disordered; it reads RNLSSASHGPRSSPAEFSSSQHLLRERKSSAPSHSSQPTLFTFEPPVSSHMQPT. Phosphoserine is present on residues Ser-135, Ser-142, Ser-143, Ser-149, Ser-150, Ser-160, Ser-165, Ser-211, Ser-220, and Ser-261. The segment covering 160-170 has biased composition (polar residues); the sequence is SAPSHSSQPTL. A Phosphothreonine modification is found at Thr-262. Tyr-263 is modified (phosphotyrosine). Thr-275 is subject to Phosphothreonine. Ser-278 and Ser-282 each carry phosphoserine. Thr-284 carries the post-translational modification Phosphothreonine. Tyr-290 is subject to Phosphotyrosine. Residue Thr-328 is modified to Phosphothreonine. The interval 338–396 is disordered; it reads VATPGDSAIAPPPRPPKPSQAETSQWGSIQQRPPISENSRSVAATIPRRNTLPAMDNSR. Residues 348-355 carry the SH3-binding motif; the sequence is PPPRPPKP. Positions 357 to 379 are enriched in polar residues; sequence QAETSQWGSIQQRPPISENSRSV. Position 365 is a phosphoserine (Ser-365). Phosphothreonine is present on residues Thr-382 and Thr-388. Ser-402 carries the phosphoserine modification. Phosphothreonine is present on Thr-405. A disordered region spans residues 408 to 445; it reads YPARGSGESASWSAEPPGKTAVGRSNSASSDDNYVPMN. At Ser-420 the chain carries Phosphoserine. Residues 430–439 show a composition bias toward polar residues; the sequence is GRSNSASSDD. At Tyr-441 the chain carries Phosphotyrosine. Ser-469 carries the post-translational modification Phosphoserine. The interval 491 to 517 is disordered; sequence PSRGSEIQPPPVNRNLKPDRKAKPTPL. An SH3-binding motif is present at residues 499-508; sequence PPPVNRNLKP. Position 532 is a phosphoserine (Ser-532). Composition is skewed to polar residues over residues 548–566 and 578–600; these read SSSQ…STDS and NPVS…STGS. 2 disordered regions span residues 548 to 632 and 646 to 665; these read SSSQ…KVDY and TMQE…GAKL. Ser-612 carries the phosphoserine modification. Tyr-632 carries the post-translational modification Phosphotyrosine. Polar residues predominate over residues 646 to 659; it reads TMQEWTDVRQSSEP.

It belongs to the GAB family. As to quaternary structure, part of a complex composed of EEIG1, TNFRSF11A/RANK, PLCG2, GAB2, TEC and BTK; complex formation increases in the presence of TNFSF11/RANKL. Interacts with HCK. Interacts with SHC1; may mediate interaction with receptors. Interacts with SYK. Interacts with PI-3 kinase. Interacts with GRB2 (via SH3 2 domain). Interacts (phosphorylated) with PTPN11. Interacts with TNFRSF11A (via cytoplasmic domain). Interacts (phosphorylated) with 14-3-3 family proteins SFN, YWHAB, YWHAE, YWHAG, YWHAH, YWHAQ and YWHAZ; prevents interaction with GRB2 and attenuates GAB2 signaling. In terms of processing, phosphorylated upon EGF stimulation. Phosphorylated on tyrosine residues by HCK upon IL6 signaling. Phosphorylated on tyrosine residue(s) by the thrombopoietin receptor (TPOR), stem cell factor receptor (SCFR), and T-cell and B-cell antigen receptors, gp130, IL-2R and IL-3R. Phosphorylated upon stimulation of TNFRSF11A/RANK by TNFSF11/RANKL. Post-translationally, dephosphorylated by PTPN11. In terms of tissue distribution, ubiquitously expressed.

The protein localises to the cytoplasm. Its subcellular location is the cell membrane. The protein resides in the membrane raft. In terms of biological role, adapter protein which acts downstream of several membrane receptors including cytokine, antigen, hormone, cell matrix and growth factor receptors to regulate multiple signaling pathways. Regulates osteoclast differentiation mediating the TNFRSF11A/RANK signaling. In allergic response, it plays a role in mast cells activation and degranulation through PI-3-kinase regulation. Also involved in the regulation of cell proliferation and hematopoiesis. The sequence is that of GRB2-associated-binding protein 2 (Gab2) from Mus musculus (Mouse).